We begin with the raw amino-acid sequence, 188 residues long: dCTP deaminase (188 aa).

DCTP contacts are provided by residues 111–116, 135–137, Q156, Y170, and Q180; these read KSTYAR and TLE. The Proton donor/acceptor role is filled by E137.

It belongs to the dCTP deaminase family. Homotrimer.

It catalyses the reaction dCTP + H2O + H(+) = dUTP + NH4(+). Its pathway is pyrimidine metabolism; dUMP biosynthesis; dUMP from dCTP (dUTP route): step 1/2. Its function is as follows. Catalyzes the deamination of dCTP to dUTP. This Neisseria meningitidis serogroup B (strain ATCC BAA-335 / MC58) protein is dCTP deaminase.